Here is a 1723-residue protein sequence, read N- to C-terminus: Homeobox protein 5 (1723 aa).

Over residues 36-50 the composition is skewed to low complexity; sequence QLQQPQHQPQHYQQQ. 9 disordered regions span residues 36 to 425, 440 to 522, 543 to 756, 878 to 978, 1080 to 1214, 1226 to 1264, 1345 to 1399, 1456 to 1498, and 1513 to 1547; these read QLQQ…APGT, SSSP…QLQQ, ENIT…PPLT, GTIV…TGSL, IFNN…SENN, VSLG…NQQQ, IVNN…TQTS, QQQQ…STTT, and HNQQ…SRRK. The span at 51–72 shows a compositional bias: polar residues; the sequence is DSFVSPNLDNNNPQIHVQSNNY. 2 stretches are compositionally biased toward low complexity: residues 73–107 and 114–212; these read NQNG…NNSS and NNSS…NNNN. Polar residues-rich tracts occupy residues 223-237 and 244-257; these read SQPT…QHNP and GQHN…MVMD. 2 stretches are compositionally biased toward low complexity: residues 258–284 and 291–350; these read NNNN…NSNS and NNNN…NNNN. Residues 300–351 are a coiled coil; sequence YNNNNNNNNNNNSNSNNNNNNNNNNNNNNNNNNNNNNNNNNNNNSNNNNNNQ. The segment covering 351–369 has biased composition (polar residues); sequence QFSQSYDSTLGNNRFSSMM. Low complexity-rich tracts occupy residues 371 to 421 and 440 to 465; these read QPIQ…LIGS and SSSP…LSSS. The segment covering 483–510 has biased composition (polar residues); that stretch reads MSSITNTNLKSTQASTLKESKRSNSSPN. Low complexity-rich tracts occupy residues 511-522, 544-571, and 581-593; these read LKKQMQLQQLQQ, NITN…ITNN, and NSNN…DSIN. Positions 632–655 are enriched in polar residues; sequence HISTTQQSPSLNGSTGGSMLTPTM. The segment covering 660-669 has biased composition (gly residues); that stretch reads LSGGGSGGGF. Over residues 673–685 the composition is skewed to polar residues; that stretch reads ISPTGTTSNKDLQ. 3 stretches are compositionally biased toward low complexity: residues 686 to 699, 710 to 727, and 734 to 745; these read SSPS…SMSM, SMSS…SNGL, and SNNMNSSGGIPT. Pro residues predominate over residues 746–755; that stretch reads PSTPTSPPPL. Over residues 882 to 928 the composition is skewed to low complexity; it reads NPTNVNNNNINNNNNNNNNNNNNNNNNNNNNNNNNNNNTTTTTTTTT. The span at 929–945 shows a compositional bias: polar residues; sequence SANTVQSGTTSNSNLVF. Low complexity-rich tracts occupy residues 946 to 977 and 1082 to 1146; these read QQTS…STGS and NNNN…SINS. Composition is skewed to polar residues over residues 1147-1159 and 1176-1187; these read PRPS…NSSG and DISTGLMASSDQ. Residues 1193-1270 adopt a coiled-coil conformation; that stretch reads QQQQHQQLVN…NQQQILHQQL (78 aa). Over residues 1194–1214 the composition is skewed to low complexity; the sequence is QQQHQQLVNNNNNNMNNSENN. The span at 1226–1242 shows a compositional bias: polar residues; sequence VSLGSLPTNTPSSMEIE. Low complexity-rich tracts occupy residues 1243 to 1264, 1347 to 1384, 1456 to 1480, 1487 to 1498, and 1518 to 1528; these read QQQQ…NQQQ, NNQN…TNTP, QQQQ…RSSP, SNTNTTTTSTTT, and SPISPRSPRSP. Residues 1431–1464 adopt a coiled-coil conformation; that stretch reads VLQQQQQQQQQQQQQQQQQQQQQQQQQQQQQQET. The segment covering 1529-1543 has biased composition (polar residues); the sequence is HGTSGDYNDGSQSPS. Residues 1543 to 1607 constitute a DNA-binding region (homeobox); the sequence is SSRRKNRFTD…NKRARSRPSP (65 aa). The EF-hand domain maps to 1553–1588; it reads FQIKRMNDCFENLDKNNNGKFTSEEICQIATELGLT. Disordered stretches follow at residues 1598-1625 and 1661-1723; these read NKRA…GNNS and LHQQ…TINE. Residues 1612 to 1625 show a composition bias toward low complexity; that stretch reads TNPLTSSTNNGNNS. A coiled-coil region spans residues 1632–1702; that stretch reads LQQQHLQQVQ…NNNNNNNNNN (71 aa). Polar residues predominate over residues 1665–1675; it reads SANTTPQLNSM. The span at 1676–1723 shows a compositional bias: low complexity; it reads NPNSINYNNNNNNNNNNNNNNNNNNNNNNNNNNNNNNIINNNITTINE.

The protein localises to the nucleus. Functionally, putative transcription factor. The polypeptide is Homeobox protein 5 (hbx5-1) (Dictyostelium discoideum (Social amoeba)).